Here is a 515-residue protein sequence, read N- to C-terminus: Aldehyde dehydrogenase (515 aa).

Residues 1–12 (MTVAEQQPQHQG) show a composition bias toward polar residues. The interval 1 to 20 (MTVAEQQPQHQGYANPGTPG) is disordered. 228–234 (GFGLEAG) is a binding site for NAD(+). Residues glutamate 272 and cysteine 311 contribute to the active site.

Belongs to the aldehyde dehydrogenase family.

The enzyme catalyses an aldehyde + NAD(+) + H2O = a carboxylate + NADH + 2 H(+). The polypeptide is Aldehyde dehydrogenase (aldA) (Deinococcus radiodurans (strain ATCC 13939 / DSM 20539 / JCM 16871 / CCUG 27074 / LMG 4051 / NBRC 15346 / NCIMB 9279 / VKM B-1422 / R1)).